The chain runs to 290 residues: Manganese efflux system protein MneS (290 aa).

The next 6 membrane-spanning stretches (helical) occupy residues 15 to 35 (LVSI…GYLF), 39 to 61 (ALTA…LIGL), 82 to 102 (IASL…LFSA), 113 to 133 (TPDM…LIVY), 159 to 179 (AFVS…LAWI), and 181 to 201 (TVTA…IFKE).

Belongs to the cation diffusion facilitator (CDF) transporter (TC 2.A.4) family.

The protein localises to the cell membrane. Secondary manganese efflux system. May prevent manganese intoxication. The sequence is that of Manganese efflux system protein MneS from Bacillus subtilis (strain 168).